The chain runs to 1736 residues: Centrosomal protein of 152 kDa (1736 aa).

An interaction with PLK4 region spans residues 1–60 (MSLEFGSVALQTQNEDEEFDKEDFEREKELQQLLTDLPHDMLDDELSSPERHDSDCSMDG). Positions 1–127 (MSLEFGSVAL…SGYSPPGKRE (127 aa)) are disordered. 2 stretches are compositionally biased toward basic and acidic residues: residues 61–82 (RAAEPHPSEHLERKWIERDILP) and 94–105 (EENRSKTEDQHL). Coiled coils occupy residues 228–481 (IIQL…AELG), 552–651 (HLVS…QEFD), 692–776 (LEVY…TERQ), 835–868 (AAVSKAEAAAVLAEEQARQVQQEKELATKEALRK), 950–1075 (NVMS…YEED), and 1205–1315 (GHCF…KIKR). Positions 571 to 592 (FQQSKDGDSGMETKTDTSEKTT) are disordered. A compositionally biased stretch (basic and acidic residues) spans 575-592 (KDGDSGMETKTDTSEKTT). Threonine 1277 carries the post-translational modification Phosphothreonine. 4 disordered regions span residues 1416 to 1479 (GTER…ASTA), 1543 to 1562 (EKNSSPRCISESRHTTLRSP), 1574 to 1614 (GSPT…SDST), and 1677 to 1736 (QQGK…SPLE). Residues 1462–1473 (RRLEESKHREMR) are compositionally biased toward basic and acidic residues. Composition is skewed to polar residues over residues 1576 to 1595 (PTETDSIASEKSQGVGSQDS) and 1603 to 1614 (PSSSPAWPSDST). Lysine 1714 is modified (N6-acetyllysine).

This sequence belongs to the CEP152 family. In terms of assembly, interacts (via N-terminus) with PLK4; the interaction is mutally exclusive with a PLK4:CEP192 interaction. Interacts (via C-terminus) with CPAP (via-N-terminus). Interacts with CINP. Interacts with CDK5RAP2, WDR62, CEP63 and CEP131. CEP63, CDK5RAP2, CEP152, WDR62 are proposed to form a stepwise assembled complex at the centrosome forming a ring near parental centrioles. Interacts with DEUP1; this interaction recruits CEP152 to the deuterosome. The interactions with CEP63 and DEUP1 are mutually exclusive. Interacts with CCDC66.

The protein localises to the cytoplasm. The protein resides in the cytoskeleton. It localises to the microtubule organizing center. It is found in the centrosome. Its subcellular location is the centriole. Its function is as follows. Necessary for centrosome duplication; the function also seems to involve CEP63, CDK5RAP2 and WDR62 through a stepwise assembled complex at the centrosome that recruits CDK2 required for centriole duplication. Acts as a molecular scaffold facilitating the interaction of PLK4 and CPAP, 2 molecules involved in centriole formation. Proposed to snatch PLK4 away from PLK4:CEP92 complexes in early G1 daughter centriole and to reposition PLK4 at the outer boundary of a newly forming CEP152 ring structure. Also plays a key role in deuterosome-mediated centriole amplification in multiciliated that can generate more than 100 centrioles. Overexpression of cep152 can drive amplification of centrioles. This chain is Centrosomal protein of 152 kDa (Cep152), found in Mus musculus (Mouse).